Reading from the N-terminus, the 275-residue chain is Putative ABC transporter permease protein ORF2 (275 aa).

The next 6 membrane-spanning stretches (helical) occupy residues 11-31 (YFIF…FMLF), 74-94 (IAVS…AFAF), 108-128 (LIIA…YVLT), 136-156 (TVFA…IFIL), 185-205 (ILLP…GTYL), and 239-259 (IPAI…AYIF). The region spanning 69–260 (LKNSVIAVSI…LPMLIAYIFG (192 aa)) is the ABC transmembrane type-1 domain.

It belongs to the binding-protein-dependent transport system permease family. MalFG subfamily.

The protein localises to the cell membrane. This chain is Putative ABC transporter permease protein ORF2, found in Caldicellulosiruptor sp. (strain Rt8B.4).